The primary structure comprises 418 residues: Tyrosine--tRNA ligase (418 aa).

An L-tyrosine-binding site is contributed by Tyr-38. A 'HIGH' region motif is present at residues Cys-43–Ser-52. L-tyrosine contacts are provided by Tyr-175 and Gln-179. The 'KMSKS' region motif lies at Lys-235–Thr-239. Lys-238 is a binding site for ATP. Residues Leu-348 to Met-413 enclose the S4 RNA-binding domain.

The protein belongs to the class-I aminoacyl-tRNA synthetase family. TyrS type 1 subfamily. As to quaternary structure, homodimer.

The protein localises to the cytoplasm. It carries out the reaction tRNA(Tyr) + L-tyrosine + ATP = L-tyrosyl-tRNA(Tyr) + AMP + diphosphate + H(+). Catalyzes the attachment of tyrosine to tRNA(Tyr) in a two-step reaction: tyrosine is first activated by ATP to form Tyr-AMP and then transferred to the acceptor end of tRNA(Tyr). This is Tyrosine--tRNA ligase from Ehrlichia chaffeensis (strain ATCC CRL-10679 / Arkansas).